A 185-amino-acid chain; its full sequence is Ribosome-recycling factor (185 aa).

Belongs to the RRF family.

It is found in the cytoplasm. Responsible for the release of ribosomes from messenger RNA at the termination of protein biosynthesis. May increase the efficiency of translation by recycling ribosomes from one round of translation to another. This is Ribosome-recycling factor from Saccharopolyspora erythraea (strain ATCC 11635 / DSM 40517 / JCM 4748 / NBRC 13426 / NCIMB 8594 / NRRL 2338).